The sequence spans 616 residues: Dihydroxy-acid dehydratase (616 aa).

Aspartate 81 lines the Mg(2+) pocket. Residue cysteine 122 participates in [2Fe-2S] cluster binding. Aspartate 123 and lysine 124 together coordinate Mg(2+). An N6-carboxylysine modification is found at lysine 124. Residue cysteine 195 participates in [2Fe-2S] cluster binding. Position 491 (glutamate 491) interacts with Mg(2+). Serine 517 functions as the Proton acceptor in the catalytic mechanism.

It belongs to the IlvD/Edd family. Homodimer. Requires [2Fe-2S] cluster as cofactor. It depends on Mg(2+) as a cofactor.

The catalysed reaction is (2R)-2,3-dihydroxy-3-methylbutanoate = 3-methyl-2-oxobutanoate + H2O. It catalyses the reaction (2R,3R)-2,3-dihydroxy-3-methylpentanoate = (S)-3-methyl-2-oxopentanoate + H2O. The protein operates within amino-acid biosynthesis; L-isoleucine biosynthesis; L-isoleucine from 2-oxobutanoate: step 3/4. Its pathway is amino-acid biosynthesis; L-valine biosynthesis; L-valine from pyruvate: step 3/4. Functions in the biosynthesis of branched-chain amino acids. Catalyzes the dehydration of (2R,3R)-2,3-dihydroxy-3-methylpentanoate (2,3-dihydroxy-3-methylvalerate) into 2-oxo-3-methylpentanoate (2-oxo-3-methylvalerate) and of (2R)-2,3-dihydroxy-3-methylbutanoate (2,3-dihydroxyisovalerate) into 2-oxo-3-methylbutanoate (2-oxoisovalerate), the penultimate precursor to L-isoleucine and L-valine, respectively. The polypeptide is Dihydroxy-acid dehydratase (Sodalis glossinidius (strain morsitans)).